Here is a 287-residue protein sequence, read N- to C-terminus: Large ribosomal subunit protein uL2 (287 aa).

The disordered stretch occupies residues 216–287; sequence RRPEVRGSVM…SKRGRGGRDA (72 aa). Over residues 271-287 the composition is skewed to basic residues; it reads QRRRRKSSKRGRGGRDA.

The protein belongs to the universal ribosomal protein uL2 family. In terms of assembly, part of the 50S ribosomal subunit. Forms a bridge to the 30S subunit in the 70S ribosome.

Its function is as follows. One of the primary rRNA binding proteins. Required for association of the 30S and 50S subunits to form the 70S ribosome, for tRNA binding and peptide bond formation. It has been suggested to have peptidyltransferase activity; this is somewhat controversial. Makes several contacts with the 16S rRNA in the 70S ribosome. The polypeptide is Large ribosomal subunit protein uL2 (Synechococcus sp. (strain ATCC 27144 / PCC 6301 / SAUG 1402/1) (Anacystis nidulans)).